The primary structure comprises 347 residues: Protein RecA (347 aa).

ATP is bound at residue 80 to 87 (GPESSGKT).

It belongs to the RecA family.

Its subcellular location is the cytoplasm. Functionally, can catalyze the hydrolysis of ATP in the presence of single-stranded DNA, the ATP-dependent uptake of single-stranded DNA by duplex DNA, and the ATP-dependent hybridization of homologous single-stranded DNAs. It interacts with LexA causing its activation and leading to its autocatalytic cleavage. This is Protein RecA from Chlorobaculum parvum (strain DSM 263 / NCIMB 8327) (Chlorobium vibrioforme subsp. thiosulfatophilum).